We begin with the raw amino-acid sequence, 152 residues long: Transcriptional regulator MraZ (152 aa).

SpoVT-AbrB domains follow at residues A5–Q52 and A81–E124.

This sequence belongs to the MraZ family. As to quaternary structure, forms oligomers.

The protein resides in the cytoplasm. It is found in the nucleoid. The protein is Transcriptional regulator MraZ of Histophilus somni (strain 129Pt) (Haemophilus somnus).